A 266-amino-acid polypeptide reads, in one-letter code: 3-methyl-2-oxobutanoate hydroxymethyltransferase 2 (266 aa).

2 residues coordinate Mg(2+): Asp45 and Asp84. 3-methyl-2-oxobutanoate contacts are provided by residues 45 to 46, Asp84, and Lys112; that span reads DS. Glu114 contacts Mg(2+). Glu181 (proton acceptor) is an active-site residue.

It belongs to the PanB family. In terms of assembly, homodecamer; pentamer of dimers. Mg(2+) serves as cofactor.

The protein resides in the cytoplasm. The enzyme catalyses 3-methyl-2-oxobutanoate + (6R)-5,10-methylene-5,6,7,8-tetrahydrofolate + H2O = 2-dehydropantoate + (6S)-5,6,7,8-tetrahydrofolate. It functions in the pathway cofactor biosynthesis; (R)-pantothenate biosynthesis; (R)-pantoate from 3-methyl-2-oxobutanoate: step 1/2. Its function is as follows. Catalyzes the reversible reaction in which hydroxymethyl group from 5,10-methylenetetrahydrofolate is transferred onto alpha-ketoisovalerate to form ketopantoate. This is 3-methyl-2-oxobutanoate hydroxymethyltransferase 2 from Pseudomonas fluorescens (strain ATCC BAA-477 / NRRL B-23932 / Pf-5).